We begin with the raw amino-acid sequence, 168 residues long: Bifunctional protein PyrR (168 aa).

Substrate-binding positions include 36-37, Arg-77, 94-102, and Val-151; these read TG and DDVLMSGRT. The short motif at 90–102 is the PRPP-binding element; sequence LVLIDDVLMSGRT.

This sequence belongs to the purine/pyrimidine phosphoribosyltransferase family. PyrR subfamily.

It carries out the reaction UMP + diphosphate = 5-phospho-alpha-D-ribose 1-diphosphate + uracil. Functionally, regulates the transcription of the pyrimidine nucleotide (pyr) operon in response to exogenous pyrimidines. Its function is as follows. Also displays a weak uracil phosphoribosyltransferase activity which is not physiologically significant. In Pseudomonas fluorescens, this protein is Bifunctional protein PyrR.